A 366-amino-acid polypeptide reads, in one-letter code: NADH-quinone oxidoreductase subunit D (366 aa).

Belongs to the complex I 49 kDa subunit family. NDH-1 is composed of 14 different subunits. Subunits NuoB, C, D, E, F, and G constitute the peripheral sector of the complex.

The protein localises to the cell membrane. The enzyme catalyses a quinone + NADH + 5 H(+)(in) = a quinol + NAD(+) + 4 H(+)(out). NDH-1 shuttles electrons from NADH, via FMN and iron-sulfur (Fe-S) centers, to quinones in the respiratory chain. The immediate electron acceptor for the enzyme in this species is believed to be a menaquinone. Couples the redox reaction to proton translocation (for every two electrons transferred, four hydrogen ions are translocated across the cytoplasmic membrane), and thus conserves the redox energy in a proton gradient. The polypeptide is NADH-quinone oxidoreductase subunit D (Bacillus thuringiensis (strain Al Hakam)).